The chain runs to 165 residues: Large ribosomal subunit protein uL10 (165 aa).

It belongs to the universal ribosomal protein uL10 family. In terms of assembly, part of the ribosomal stalk of the 50S ribosomal subunit. The N-terminus interacts with L11 and the large rRNA to form the base of the stalk. The C-terminus forms an elongated spine to which L12 dimers bind in a sequential fashion forming a multimeric L10(L12)X complex.

Forms part of the ribosomal stalk, playing a central role in the interaction of the ribosome with GTP-bound translation factors. The sequence is that of Large ribosomal subunit protein uL10 from Enterobacter sp. (strain 638).